Reading from the N-terminus, the 47-residue chain is Protein YtiD (47 aa).

The chain is Protein YtiD (ytiD) from Escherichia coli (strain K12).